The primary structure comprises 1252 residues: MFKCPERVSIKKKEDILDLPNLVEVQIKSYKQFLQIGKLAEERENIGLEEVFREIFPIKSYNEATILEYLSYNLGVPKYSPEECIRRGITYSVTLKVRFRLTDETGIKEEEVYMGTIPIMTDKGTFIINGAERVVVSQVHRSPGINFEQEKHSKGNVLFSFRIIPYRGSWLEAVFDINDLIYIHIDRKKRRRKILAMTFIRALGYSTDADIIEEFFSVEERSLRLEKDFVALVGKVLADNVVDADSSLVYGKAGEKLSTAMLKRILDAGVQSLKIAVGADENHPIIKMLAKDPTDSYEAALKDFYRRLRPGEPATLVNARSTIMRLFFDAKRYNLGRVGRYKLNKKLGFPLDDETLSQVTLRKEDVIGALKYLIRLRMGDEKTSIDDIDHLANRRVRSVGELIQNHCRSGLARMEKIVRERMNLFDFSSDTLTPGKIISAKGLVSVLKDFFSRSQLSQFMDQTNPVAELTHKRRLSALGPGGLNRERAGFEVRDVHASHYGRICPIETPEGPNIGLITSLSSFAKINEFGFIETPYRVVRDGIVTDEIEYMTADVEEECVIAQASAELDEYDMFKTPVCWARYKGEAFEADTSTVTHMDVSPKQLVSVVTGLIPFLEHDDANRALMGSNMQRQAVPLLKTEAAIVGTGLEGRAAKDSGAIIVAQEDGVVEYVDSYEIVVAKKNNPTLKDRYQLKKFLRSNSGTCINQTPLCSVGDVVTHGDVLADGPATDKGELALGKNVLVAFMPWYGYNFEDAIIISERLIKQDAYTSIYIEEFELTARDTKLGKEEITRDIPNVSEEVLANLGEDGVVRIGAEVKPGDILVGKITPKSETELAPEERLLRAIFGEKAADVKDASLTVPPGTEGVVMDVKVFSRKDRLSKSDDELVEEAVHLKDLQKEYKSQLAQLKVEHREKLGALLLNEKAPAAIIHRRSADILVQEGAIFDQETIELLERESLVDLLMAPCDMYDVLKDILSSYETAVQRLEVNYKTEAEHIKEGDADLDHGVIRQVKVYVASKRKLQVGDKMAGRHGNKGVVSKIVPEADMPFLANGETVQMILNPLGVPSRMNLGQVLETHLGYAAKTAGIYVKTPVFEGFPESRIWDMMIEQGLPEDGKSYLFDGKTGERFDSKVVVGYIYMLKLSHLIADKIHARSIGPYSLVTQQPLGGKAQMGGQRFGEMEVWALEAYGVAHMLQEILTVKSDDVSGRTRIYESIVKGENLLRSGTPESFNVLIKEMQGLGLDVRPMVVDA.

Belongs to the RNA polymerase beta chain family. The RNAP catalytic core consists of 2 alpha, 1 beta, 1 beta' and 1 omega subunit. When a sigma factor is associated with the core the holoenzyme is formed, which can initiate transcription.

The enzyme catalyses RNA(n) + a ribonucleoside 5'-triphosphate = RNA(n+1) + diphosphate. In terms of biological role, DNA-dependent RNA polymerase catalyzes the transcription of DNA into RNA using the four ribonucleoside triphosphates as substrates. The protein is DNA-directed RNA polymerase subunit beta of Chlamydia trachomatis serovar D (strain ATCC VR-885 / DSM 19411 / UW-3/Cx).